A 957-amino-acid chain; its full sequence is Bifunctional glutamine synthetase adenylyltransferase/adenylyl-removing enzyme (957 aa).

An adenylyl removase region spans residues 1-449; that stretch reads MTQHLERPEL…VFDDIIGTDE (449 aa). The tract at residues 457–957 is adenylyl transferase; sequence SEQYNEMWTM…QEYLVPSSDE (501 aa).

Belongs to the GlnE family. Mg(2+) is required as a cofactor.

It carries out the reaction [glutamine synthetase]-O(4)-(5'-adenylyl)-L-tyrosine + phosphate = [glutamine synthetase]-L-tyrosine + ADP. It catalyses the reaction [glutamine synthetase]-L-tyrosine + ATP = [glutamine synthetase]-O(4)-(5'-adenylyl)-L-tyrosine + diphosphate. Its function is as follows. Involved in the regulation of glutamine synthetase GlnA, a key enzyme in the process to assimilate ammonia. When cellular nitrogen levels are high, the C-terminal adenylyl transferase (AT) inactivates GlnA by covalent transfer of an adenylyl group from ATP to specific tyrosine residue of GlnA, thus reducing its activity. Conversely, when nitrogen levels are low, the N-terminal adenylyl removase (AR) activates GlnA by removing the adenylyl group by phosphorolysis, increasing its activity. The regulatory region of GlnE binds the signal transduction protein PII (GlnB) which indicates the nitrogen status of the cell. In Photobacterium profundum (strain SS9), this protein is Bifunctional glutamine synthetase adenylyltransferase/adenylyl-removing enzyme.